The chain runs to 766 residues: Polyribonucleotide nucleotidyltransferase (766 aa).

2 residues coordinate Mg(2+): D490 and D496. The 60-residue stretch at 557–616 folds into the KH domain; it reads PKIDTITIPVDKIKVVIGKGGEQIDKIIAETGVKIDIDDEGLCSIFSSDQSAIDRAKEII. Residues 626-694 form the S1 motif domain; it reads GEVYEAKVVR…DKGRVDASMR (69 aa). Composition is skewed to basic and acidic residues over residues 700–734 and 744–766; these read PEGYVEPERKPRERRDNKDRRNGNGFDRRNNDRNN and FELRERKSHVDHEFPELSTKKPE. A disordered region spans residues 700-766; that stretch reads PEGYVEPERK…FPELSTKKPE (67 aa).

It belongs to the polyribonucleotide nucleotidyltransferase family. The cofactor is Mg(2+).

Its subcellular location is the cytoplasm. It catalyses the reaction RNA(n+1) + phosphate = RNA(n) + a ribonucleoside 5'-diphosphate. Its function is as follows. Involved in mRNA degradation. Catalyzes the phosphorolysis of single-stranded polyribonucleotides processively in the 3'- to 5'-direction. The polypeptide is Polyribonucleotide nucleotidyltransferase (Lactococcus lactis subsp. cremoris (strain MG1363)).